Reading from the N-terminus, the 604-residue chain is MSAKKKDLLSSAMKRTSEWISSQEVSSDVTVHVGEASFSLHKFPLMSKCGFIKKLVSESSKDSDSTVIKIPDIPGGSEAFELAAKFCYGINFDMSTENIAMLRCAAEYLEMTEEHSVENLVVRAEAYLNEVALKSLSSSITVLHKSEKLLPIAERVKLVSRCIDAIAYMTCQESHFCSPSSSNSGNNEVVVQQQSKQPVVDWWAEDLTVLRIDSFQRVLIAMMARGFKQYGLGPVLMLYAQKSLRGLEIFGKGMKKIEPKQEHEKRVILETIVSLLPREKNAMSVSFLSMLLRAAIFLETTVACRLDLENRMGLQLGQAVLDDLLIPSYSFTGDHSMFDTDTVQRILMNYLEFEVEGVRLSNNGVDLAGDMERVGKLLENYMAEIASDRNVSLQKFIGLAELIPEQSRVTEDGMYRAVDIYLKAHPNMSDVERKKVCSLMDCQKLSREACAHAAQNDRLPVQTIVQVLYYEQQRLRGEVTNDSDSPAPPPPQPAAVLPPKLSSYTDELSKLKRENQDLKLELLKMKMKLKEFEKESEKKTSSSTISTNPSSPISTASTGKPPLPRKSFINSVSKKLGKLNPFSITPYNGRGRTKPPKDRRHSIS.

Positions 27–96 (SDVTVHVGEA…CYGINFDMST (70 aa)) constitute a BTB domain. Residues 201–474 (DWWAEDLTVL…VQVLYYEQQR (274 aa)) form the NPH3 domain. Residue Tyr415 is modified to Phosphotyrosine. 2 disordered regions span residues 478–499 (EVTNDSDSPAPPPPQPAAVLPP) and 532–604 (FEKE…HSIS). The stretch at 500-541 (KLSSYTDELSKLKRENQDLKLELLKMKMKLKEFEKESEKKTS) forms a coiled coil. The segment covering 541 to 558 (SSSTISTNPSSPISTAST) has biased composition (low complexity). Residues 591–604 (GRTKPPKDRRHSIS) show a composition bias toward basic residues.

Belongs to the NPH3 family. As to quaternary structure, interacts with CAMTA3 and CUL3A.

The protein operates within protein modification; protein ubiquitination. Functionally, acts as a substrate-specific adapter of an E3 ubiquitin-protein ligase complex (CUL3-RBX1-BTB) which mediates the ubiquitination and subsequent proteasomal degradation of target proteins. Involved in disease resistance. Acts as a substrate adapter that recruits CAMTA3/SR1 for ubiquitination and degradation during pathogen infection. Acts as a positive regulator of plant defense by removing the defense suppressor CAMTA3/SR1. The polypeptide is BTB/POZ domain-containing protein SR1IP1 (Arabidopsis thaliana (Mouse-ear cress)).